Here is a 258-residue protein sequence, read N- to C-terminus: Lysine-rich coiled-coil protein 1 (258 aa).

The segment at 142–258 is disordered; it reads DNSTSTHQAS…MLWDQSILGF (117 aa). Residues 150-161 are compositionally biased toward basic residues; that stretch reads ASHKQIHQKRKR. 3 stretches are compositionally biased toward basic and acidic residues: residues 162-175, 183-213, and 220-232; these read HPEEGREKSEEEWS, CKEIDLDKHKSIQRKKTEVEIETVHVSTEKL, and KGRDVVSKKEERK. Residues 211-248 adopt a coiled-coil conformation; sequence EKLKNRKEKKGRDVVSKKEERKRTKKKKEQGQERTEEE.

The chain is Lysine-rich coiled-coil protein 1 (KRCC1) from Pongo abelii (Sumatran orangutan).